Here is a 704-residue protein sequence, read N- to C-terminus: DNA ligase (704 aa).

NAD(+)-binding positions include aspartate 43–aspartate 47, serine 92–leucine 93, and glutamate 124. Lysine 126 serves as the catalytic N6-AMP-lysine intermediate. The NAD(+) site is built by arginine 147, glutamate 182, lysine 298, and lysine 322. Zn(2+) is bound by residues cysteine 427, cysteine 430, cysteine 445, and cysteine 451. The region spanning proline 625–alanine 704 is the BRCT domain.

The protein belongs to the NAD-dependent DNA ligase family. LigA subfamily. Requires Mg(2+) as cofactor. Mn(2+) is required as a cofactor.

The enzyme catalyses NAD(+) + (deoxyribonucleotide)n-3'-hydroxyl + 5'-phospho-(deoxyribonucleotide)m = (deoxyribonucleotide)n+m + AMP + beta-nicotinamide D-nucleotide.. DNA ligase that catalyzes the formation of phosphodiester linkages between 5'-phosphoryl and 3'-hydroxyl groups in double-stranded DNA using NAD as a coenzyme and as the energy source for the reaction. It is essential for DNA replication and repair of damaged DNA. This is DNA ligase from Cereibacter sphaeroides (strain KD131 / KCTC 12085) (Rhodobacter sphaeroides).